The chain runs to 1133 residues: DNA-directed RNA polymerase III subunit RPC2 (1133 aa).

Lys-186 contacts RNA. Residue Arg-195 participates in DNA binding. Arg-213 serves as a coordination point for RNA. Asp-432 is a DNA binding site. Residues Gln-438 and Gln-692 each coordinate RNA. Asp-753 contributes to the Mg(2+) binding site. RNA contacts are provided by Lys-896, Lys-904, and Lys-1019. Arg-1039, Ser-1040, and Arg-1046 together coordinate DNA. Cys-1080, Cys-1083, Cys-1092, and Cys-1095 together coordinate Zn(2+). The C4-type zinc-finger motif lies at 1080 to 1095 (CGQCGLLGYSGWCHYC).

The protein belongs to the RNA polymerase beta chain family. As to quaternary structure, component of the RNA polymerase III (Pol III) complex consisting of 17 subunits: a ten-subunit catalytic core composed of POLR3A/RPC1, POLR3B/RPC2, POLR1C/RPAC1, POLR1D/RPAC2, POLR3K/RPC10, POLR2E/RPABC1, POLR2F/RPABC2, POLR2H/RPABC3, POLR2K/RPABC4 and POLR2L/RPABC5; a mobile stalk composed of two subunits POLR3H/RPC8 and CRCP/RPC9, protruding from the core and functioning primarily in transcription initiation; and additional subunits homologous to general transcription factors of the RNA polymerase II machinery, POLR3C/RPC3-POLR3F/RPC6-POLR3G/RPC7 heterotrimer required for transcription initiation and POLR3D/RPC4-POLR3E/RPC5 heterodimer involved in both transcription initiation and termination. It depends on Mg(2+) as a cofactor.

It localises to the nucleus. The protein localises to the cytoplasm. Its subcellular location is the cytosol. It carries out the reaction RNA(n) + a ribonucleoside 5'-triphosphate = RNA(n+1) + diphosphate. Catalytic core component of RNA polymerase III (Pol III), a DNA-dependent RNA polymerase which synthesizes small non-coding RNAs using the four ribonucleoside triphosphates as substrates. Synthesizes 5S rRNA, snRNAs, tRNAs and miRNAs from at least 500 distinct genomic loci. Pol III-mediated transcription cycle proceeds through transcription initiation, transcription elongation and transcription termination stages. During transcription initiation, Pol III is recruited to DNA promoters type I, II or III with the help of general transcription factors and other specific initiation factors. Once the polymerase has escaped from the promoter it enters the elongation phase during which RNA is actively polymerized, based on complementarity with the template DNA strand. Transcription termination involves the release of the RNA transcript and polymerase from the DNA. Forms Pol III active center together with the largest subunit POLR3A/RPC1. A single-stranded DNA template strand of the promoter is positioned within the central active site cleft of Pol III. Appends one nucleotide at a time to the 3' end of the nascent RNA, with POLR3A/RPC1 contributing a Mg(2+)-coordinating DxDGD motif, and POLR3B/RPC2 participating in the coordination of a second Mg(2+) ion and providing lysine residues believed to facilitate Watson-Crick base pairing between the incoming nucleotide and template base. Typically, Mg(2+) ions direct a 5' nucleoside triphosphate to form a phosphodiester bond with the 3' hydroxyl of the preceding nucleotide of the nascent RNA, with the elimination of pyrophosphate. Pol III plays a key role in sensing and limiting infection by intracellular bacteria and DNA viruses. Acts as a nuclear and cytosolic DNA sensor involved in innate immune response. Can sense non-self dsDNA that serves as template for transcription into dsRNA. The non-self RNA polymerase III transcripts, such as Epstein-Barr virus-encoded RNAs (EBERs) induce type I interferon and NF-kappa-B through the RIG-I pathway. In Homo sapiens (Human), this protein is DNA-directed RNA polymerase III subunit RPC2.